Reading from the N-terminus, the 214-residue chain is Adenylate kinase (214 aa).

10-15 is an ATP binding site; it reads GAGKGT. The interval 30-59 is NMP; that stretch reads STGDMLRAAIKAGTELGKQAKAVIDAGQLV. AMP-binding positions include Thr-31, Arg-36, 57 to 59, 85 to 88, and Gln-92; these read QLV and GFPR. The interval 122 to 159 is LID; the sequence is GRRAHLPSGRTYHVVYNPPKVEGKDDVTGEDLVVRDDD. ATP is bound by residues Arg-123 and 132–133; that span reads TY. Arg-156 and Arg-167 together coordinate AMP. Lys-200 contacts ATP.

It belongs to the adenylate kinase family. Monomer.

The protein resides in the cytoplasm. The catalysed reaction is AMP + ATP = 2 ADP. It participates in purine metabolism; AMP biosynthesis via salvage pathway; AMP from ADP: step 1/1. Functionally, catalyzes the reversible transfer of the terminal phosphate group between ATP and AMP. Plays an important role in cellular energy homeostasis and in adenine nucleotide metabolism. The polypeptide is Adenylate kinase (Vibrio vulnificus (strain YJ016)).